Reading from the N-terminus, the 340-residue chain is UDP-3-O-acylglucosamine N-acyltransferase (340 aa).

His-240 serves as the catalytic Proton acceptor.

The protein belongs to the transferase hexapeptide repeat family. LpxD subfamily. In terms of assembly, homotrimer.

It carries out the reaction a UDP-3-O-[(3R)-3-hydroxyacyl]-alpha-D-glucosamine + a (3R)-hydroxyacyl-[ACP] = a UDP-2-N,3-O-bis[(3R)-3-hydroxyacyl]-alpha-D-glucosamine + holo-[ACP] + H(+). Its pathway is bacterial outer membrane biogenesis; LPS lipid A biosynthesis. Catalyzes the N-acylation of UDP-3-O-acylglucosamine using 3-hydroxyacyl-ACP as the acyl donor. Is involved in the biosynthesis of lipid A, a phosphorylated glycolipid that anchors the lipopolysaccharide to the outer membrane of the cell. The protein is UDP-3-O-acylglucosamine N-acyltransferase of Pseudoalteromonas translucida (strain TAC 125).